We begin with the raw amino-acid sequence, 327 residues long: Sideroflexin-2 (327 aa).

5 consecutive transmembrane segments (helical) span residues 99–119 (GMLI…VVLW), 143–163 (VTQL…AAIG), 175–195 (LFQR…NIPL), 228–248 (EVVV…PLIM), and 267–287 (FQTL…CALF).

It belongs to the sideroflexin family.

Its subcellular location is the mitochondrion membrane. The catalysed reaction is L-serine(in) = L-serine(out). Its function is as follows. Mitochondrial amino-acid transporter that mediates transport of serine into mitochondria. The polypeptide is Sideroflexin-2 (Drosophila melanogaster (Fruit fly)).